The chain runs to 410 residues: Schlafen-like protein 1 (410 aa).

Disordered regions lie at residues 1–20 and 141–199; these read MSLR…VMSQ and LHHR…SGVR. Polar residues predominate over residues 8–20; sequence AQTQMWESPVMSQ. A compositionally biased stretch (pro residues) spans 154-173; that stretch reads SHSPGPSPGPSPGLRHPPLP. Position 264–271 (264–271) interacts with ATP; the sequence is GVEDSGLV. Residues 370 to 401 are a coiled coil; the sequence is QKWAMELGKLEEKVKVLTLEKEQLQQQLRQRQ.

Belongs to the Schlafen family. Subgroup I subfamily.

In Mus musculus (Mouse), this protein is Schlafen-like protein 1 (Slfnl1).